The chain runs to 399 residues: Chorismate synthase (399 aa).

The interval 41-72 (IQKDLDRRKPGQSMITTSRGEPDKVTINSGIQ) is disordered. NADP(+) is bound at residue arginine 48. Residues 125–127 (RSS), glycine 288, 303–307 (HAPVS), and arginine 330 contribute to the FMN site. 2 stretches are compositionally biased toward basic and acidic residues: residues 363–377 (PDRL…DTDY) and 389–399 (ADTHAKTIDDD). The disordered stretch occupies residues 363–399 (PDRLDGRPGEYDTDYHPSSPQNDPEDADTHAKTIDDD).

This sequence belongs to the chorismate synthase family. It depends on FMNH2 as a cofactor.

The enzyme catalyses 5-O-(1-carboxyvinyl)-3-phosphoshikimate = chorismate + phosphate. It functions in the pathway metabolic intermediate biosynthesis; chorismate biosynthesis; chorismate from D-erythrose 4-phosphate and phosphoenolpyruvate: step 7/7. Its function is as follows. Catalyzes the anti-1,4-elimination of the C-3 phosphate and the C-6 proR hydrogen from 5-enolpyruvylshikimate-3-phosphate (EPSP) to yield chorismate, which is the branch point compound that serves as the starting substrate for the three terminal pathways of aromatic amino acid biosynthesis. This reaction introduces a second double bond into the aromatic ring system. The chain is Chorismate synthase from Haloarcula marismortui (strain ATCC 43049 / DSM 3752 / JCM 8966 / VKM B-1809) (Halobacterium marismortui).